Reading from the N-terminus, the 351-residue chain is Succinylglutamate desuccinylase (351 aa).

Residues His-73, Glu-76, and His-168 each coordinate Zn(2+). Residue Glu-231 is part of the active site.

Belongs to the AspA/AstE family. Succinylglutamate desuccinylase subfamily. Zn(2+) is required as a cofactor.

The enzyme catalyses N-succinyl-L-glutamate + H2O = L-glutamate + succinate. Its pathway is amino-acid degradation; L-arginine degradation via AST pathway; L-glutamate and succinate from L-arginine: step 5/5. Transforms N(2)-succinylglutamate into succinate and glutamate. This chain is Succinylglutamate desuccinylase, found in Burkholderia lata (strain ATCC 17760 / DSM 23089 / LMG 22485 / NCIMB 9086 / R18194 / 383).